The sequence spans 238 residues: MESWQEDLLSAFLVVKNEDELFEVVKSTASKLGFDYCAYGMQSPLSIAEPKTIMLNNYPQAWQKRYIEQRYVKVDPTVQHCMVSLQPLVWSSQNAKTQEEKDFWEEARSYGLNVGWAQSSRDFIGTRGMLTLARSTDQLSEKEQKAQYTNMYWLTQTVHSSIAKIVNDVEFSQFNLYLTNREKEALRWTAEGKTSAEIAQIIGVTERTVNFHLCNSMQKLNVNNKISAAIRAVMLGLL.

In terms of domain architecture, HTH luxR-type spans 170–236; it reads EFSQFNLYLT…SAAIRAVMLG (67 aa). The segment at residues 195-214 is a DNA-binding region (H-T-H motif); sequence SAEIAQIIGVTERTVNFHLC.

This sequence belongs to the autoinducer-regulated transcriptional regulatory protein family.

Positively regulates the expression of anoI. Required for biofilm formation and motility. Probably part of a quorum-sensing system with AnoI. In Acinetobacter nosocomialis, this protein is Transcriptional activator protein AnoR.